Consider the following 111-residue polypeptide: Putative ciliary rootlet coiled-coil protein-like 1 protein (111 aa).

The stretch at 21-86 forms a coiled coil; that stretch reads MELELSVTKL…RQAEQEATVA (66 aa).

Belongs to the rootletin family.

The chain is Putative ciliary rootlet coiled-coil protein-like 1 protein (CROCCP2) from Homo sapiens (Human).